We begin with the raw amino-acid sequence, 720 residues long: Mitogen-activated protein kinase 6 (720 aa).

Met1 participates in a covalent cross-link: Peptide (Met-Gly) (interchain with G-Cter in ubiquitin). A Protein kinase domain is found at 20–316; it reads YMDLKPLGCG…AEEALSHPYM (297 aa). Residues 26–34 and Lys49 each bind ATP; that span reads LGCGGNGLV. The active-site Proton acceptor is the Asp152. A Phosphoserine; by PAK1, PAK2 and PAK3 modification is found at Ser189. The SEG motif signature appears at 189–191; sequence SEG. The short motif at 332–337 is the FRIEDE motif element; that stretch reads FHIEDE. 3 positions are modified to phosphoserine: Ser386, Ser554, and Ser556. Residues 638 to 657 form a disordered region; that stretch reads SEMLETEPVEEGKRGERGRE. Basic and acidic residues predominate over residues 647–657; that stretch reads EEGKRGERGRE. Ser683 carries the phosphoserine modification. Residues 700-714 are compositionally biased toward polar residues; the sequence is AMKSSPQIPHKTYSS. The tract at residues 700–720 is disordered; that stretch reads AMKSSPQIPHKTYSSILKHLN.

The protein belongs to the protein kinase superfamily. CMGC Ser/Thr protein kinase family. MAP kinase subfamily. In terms of assembly, heterodimer with ERK4/MAPK4. Interacts with (via FRIEDE motif) MAPKAPK5. Interacts with UBE3A; this interaction may be indirect and mediated by HERC2, possibly via HERC2 interaction with NEURL4. Mg(2+) serves as cofactor. In terms of processing, phosphorylated at Ser-189 by PAK1, PAK2 and PAK3 resulting in catalytic activation. Phosphorylated by MAPKAPK5 at other sites. Post-translationally, ubiquitination at Met-1 leads to degradation by the proteasome pathway.

It localises to the cytoplasm. The protein localises to the nucleus. It carries out the reaction L-seryl-[protein] + ATP = O-phospho-L-seryl-[protein] + ADP + H(+). The catalysed reaction is L-threonyl-[protein] + ATP = O-phospho-L-threonyl-[protein] + ADP + H(+). Activated by phosphorylation at Ser-189. Atypical MAPK protein. Phosphorylates microtubule-associated protein 2 (MAP2) and MAPKAPK5. The precise role of the complex formed with MAPKAPK5 is still unclear, but the complex follows a complex set of phosphorylation events: upon interaction with atypical MAPKAPK5, ERK3/MAPK6 is phosphorylated at Ser-189 and then mediates phosphorylation and activation of MAPKAPK5, which in turn phosphorylates ERK3/MAPK6. May promote entry in the cell cycle. The sequence is that of Mitogen-activated protein kinase 6 (Mapk6) from Mus musculus (Mouse).